A 509-amino-acid chain; its full sequence is Solute carrier family 2, facilitated glucose transporter member 4 (509 aa).

Over 1 to 23 (MPSGFQQIGSDDGEPPRQRVTGT) the chain is Cytoplasmic. The segment at 7 to 13 (QIGSDDG) is interaction with SRFBP1. At Ser10 the chain carries Phosphoserine. Residues 24–44 (LVLAVFSAVLGSLQFGYNIGV) traverse the membrane as a helical segment. At 45–80 (INAPQKVIEQSYNATWLGRQGPGGPDSIPQGTLTTL) the chain is on the extracellular side. Asn57 carries N-linked (GlcNAc...) asparagine glycosylation. Residues 81 to 101 (WALSVAIFSVGGMISSFLIGI) traverse the membrane as a helical segment. At 102 to 110 (ISQWLGRKR) the chain is on the cytoplasmic side. A helical transmembrane segment spans residues 111–131 (AMLANNVLAVLGGALMGLANA). At 132-141 (AASYEILILG) the chain is on the extracellular side. The chain crosses the membrane as a helical span at residues 142–162 (RFLIGAYSGLTSGLVPMYVGE). The Cytoplasmic segment spans residues 163-170 (IAPTHLRG). The chain crosses the membrane as a helical span at residues 171–191 (ALGTLNQLAIVIGILVAQVLG). Gln177 lines the D-glucose pocket. The Extracellular portion of the chain corresponds to 192–200 (LESMLGTAT). A helical membrane pass occupies residues 201-221 (LWPLLLALTVLPALLQLILLP). The Cytoplasmic portion of the chain corresponds to 222 to 286 (FCPESPRYLY…QLLGSRTHRQ (65 aa)). Cys223 is lipidated: S-palmitoyl cysteine. Phosphoserine; by SGK1 is present on Ser274. Residues 287 to 307 (PLIIAVVLQLSQQLSGINAVF) form a helical membrane-spanning segment. Residues 298–299 (QQ) and Asn304 contribute to the D-glucose site. Residues 308–322 (YYSTSIFESAGVGQP) lie on the Extracellular side of the membrane. The helical transmembrane segment at 323–343 (AYATIGAGVVNTVFTLVSVLL) threads the bilayer. A D-glucose-binding site is contributed by Asn333. Residues 344–352 (VERAGRRTL) lie on the Cytoplasmic side of the membrane. The helical transmembrane segment at 353–373 (HLLGLAGMCGCAILMTVALLL) threads the bilayer. The Extracellular segment spans residues 374–384 (LERVPAMSYVS). A helical transmembrane segment spans residues 385 to 405 (IVAIFGFVAFFEIGPGPIPWF). Glu396 and Trp404 together coordinate D-glucose. Residues 406-416 (IVAELFSQGPR) lie on the Cytoplasmic side of the membrane. A helical transmembrane segment spans residues 417–437 (PAAMAVAGFSNWTCNFIVGMG). The Extracellular segment spans residues 438–444 (FQYVADA). Residues 445-465 (MGPYVFLLFAVLLLGFFIFTF) form a helical membrane-spanning segment. The Cytoplasmic portion of the chain corresponds to 466–508 (LKVPETRGRTFDQISAAFRRTPSLLEQEVKPSTELEYLGPDEN). Thr486 carries the phosphothreonine modification. Ser488 is subject to Phosphoserine. The Dileucine internalization motif motif lies at 489 to 490 (LL).

Belongs to the major facilitator superfamily. Sugar transporter (TC 2.A.1.1) family. Glucose transporter subfamily. In terms of assembly, binds to DAXX. Interacts via its N-terminus with SRFBP1. Interacts with NDUFA9. Interacts with TRARG1; the interaction is required for proper SLC2A4 recycling after insulin stimulation. Post-translationally, sumoylated. Palmitoylated. Palmitoylation by ZDHHC7 controls the insulin-dependent translocation of GLUT4 to the plasma membrane. Expressed in skeletal and cardiac muscles. Expressed in brown and white adipose tissues.

It is found in the cell membrane. The protein localises to the endomembrane system. The protein resides in the cytoplasm. Its subcellular location is the perinuclear region. It carries out the reaction D-glucose(out) = D-glucose(in). Insulin-regulated facilitative glucose transporter, which plays a key role in removal of glucose from circulation. Response to insulin is regulated by its intracellular localization: in the absence of insulin, it is efficiently retained intracellularly within storage compartments in muscle and fat cells. Upon insulin stimulation, translocates from these compartments to the cell surface where it transports glucose from the extracellular milieu into the cell. The chain is Solute carrier family 2, facilitated glucose transporter member 4 from Mus musculus (Mouse).